A 570-amino-acid chain; its full sequence is Glycine--tRNA ligase (570 aa).

The substrate site is built by Arg99 and Glu165. ATP-binding positions include 197–199, 207–212, 324–325, and 443–446; these read RNE, IRLREF, EC, and GIDR. 212-216 lines the substrate pocket; that stretch reads FTQAE. 439-443 lines the substrate pocket; sequence EPSFG.

The protein belongs to the class-II aminoacyl-tRNA synthetase family.

It is found in the cytoplasm. The enzyme catalyses tRNA(Gly) + glycine + ATP = glycyl-tRNA(Gly) + AMP + diphosphate. Catalyzes the attachment of glycine to tRNA(Gly). The protein is Glycine--tRNA ligase of Pyrococcus horikoshii (strain ATCC 700860 / DSM 12428 / JCM 9974 / NBRC 100139 / OT-3).